Reading from the N-terminus, the 465-residue chain is Cysteine--tRNA ligase (465 aa).

Cysteine 28 serves as a coordination point for Zn(2+). A 'HIGH' region motif is present at residues 30–40; that stretch reads PTVYNYIHVGN. Zn(2+)-binding residues include cysteine 208, histidine 233, and glutamate 237. The 'KMSKS' region motif lies at 265 to 269; that stretch reads KMSKS. Lysine 268 is an ATP binding site.

It belongs to the class-I aminoacyl-tRNA synthetase family. Monomer. Zn(2+) serves as cofactor.

It is found in the cytoplasm. It carries out the reaction tRNA(Cys) + L-cysteine + ATP = L-cysteinyl-tRNA(Cys) + AMP + diphosphate. The polypeptide is Cysteine--tRNA ligase (Exiguobacterium sp. (strain ATCC BAA-1283 / AT1b)).